A 278-amino-acid chain; its full sequence is MNPNSHPITKSHLFHIVDPSPWPVLTSFALLLLVIGGVSFMHGYKFNIYILSAGVISVGYCLYSWWRDVVKEGIVEHQHTSPVRKGLQIGMALFILTEIVFFGVFFASFFKSSLSPVGLLDGVWVVKQGIWPPPTIKTFDPFDIPFINTLILLLSGTTVTWAHYALEEKNQKDCVTALALTILLGIFFTTMQAYEYYHAAFKFTDGIYASNFYLATGFHGAHVIIGTIFLIVCYFRAKRGDFTTEGNGHLGFEFAAWYWHFVDVVWLFLFTFVYIFGS.

6 consecutive transmembrane segments (helical) span residues 21-41 (PWPVLTSFALLLLVIGGVSFM), 46-66 (FNIYILSAGVISVGYCLYSWW), 89-109 (IGMALFILTEIVFFGVFFASF), 174-194 (CVTALALTILLGIFFTTMQAY), 212-232 (FYLATGFHGAHVIIGTIFLIV), and 256-276 (AWYWHFVDVVWLFLFTFVYIF).

It belongs to the cytochrome c oxidase subunit 3 family.

The protein localises to the cell membrane. It catalyses the reaction 4 Fe(II)-[cytochrome c] + O2 + 8 H(+)(in) = 4 Fe(III)-[cytochrome c] + 2 H2O + 4 H(+)(out). In Rickettsia felis (strain ATCC VR-1525 / URRWXCal2) (Rickettsia azadi), this protein is Probable cytochrome c oxidase subunit 3 (ctaE).